The primary structure comprises 35 residues: Photosystem II reaction center protein M (35 aa).

Residues 5–25 (ILAVIATALFIIIPTSFLLIL) traverse the membrane as a helical segment.

The protein belongs to the PsbM family. In terms of assembly, PSII is composed of 1 copy each of membrane proteins PsbA, PsbB, PsbC, PsbD, PsbE, PsbF, PsbH, PsbI, PsbJ, PsbK, PsbL, PsbM, PsbT, PsbX, PsbY, PsbZ, Psb30/Ycf12, at least 3 peripheral proteins of the oxygen-evolving complex and a large number of cofactors. It forms dimeric complexes.

It is found in the plastid. The protein resides in the chloroplast thylakoid membrane. In terms of biological role, one of the components of the core complex of photosystem II (PSII). PSII is a light-driven water:plastoquinone oxidoreductase that uses light energy to abstract electrons from H(2)O, generating O(2) and a proton gradient subsequently used for ATP formation. It consists of a core antenna complex that captures photons, and an electron transfer chain that converts photonic excitation into a charge separation. This subunit is found at the monomer-monomer interface. This is Photosystem II reaction center protein M from Staurastrum punctulatum (Green alga).